A 345-amino-acid chain; its full sequence is uncharacterized protein (345 aa).

This is an uncharacterized protein from Archaeoglobus fulgidus (strain ATCC 49558 / DSM 4304 / JCM 9628 / NBRC 100126 / VC-16).